The chain runs to 503 residues: Aromatase (503 aa).

The next 3 helical transmembrane spans lie at 19 to 39 (EVMPVATMPILLLTGFLLLVW), 51 to 71 (GYCMGIGPLISHCRFLWMGIG), and 303 to 323 (MLIAAPDTMSVSVFFMLFLIA). Positions 309 and 374 each coordinate substrate. A heme-binding site is contributed by C437.

This sequence belongs to the cytochrome P450 family. The cofactor is heme.

It is found in the endoplasmic reticulum membrane. It localises to the microsome membrane. It catalyses the reaction testosterone + 3 reduced [NADPH--hemoprotein reductase] + 3 O2 = 17beta-estradiol + formate + 3 oxidized [NADPH--hemoprotein reductase] + 4 H2O + 4 H(+). The enzyme catalyses androst-4-ene-3,17-dione + 3 reduced [NADPH--hemoprotein reductase] + 3 O2 = estrone + formate + 3 oxidized [NADPH--hemoprotein reductase] + 4 H2O + 4 H(+). It carries out the reaction androst-4-ene-3,17-dione + reduced [NADPH--hemoprotein reductase] + O2 = 19-hydroxyandrost-4-ene-3,17-dione + oxidized [NADPH--hemoprotein reductase] + H2O + H(+). The catalysed reaction is 19-hydroxyandrost-4-ene-3,17-dione + reduced [NADPH--hemoprotein reductase] + O2 = 19-oxo-androst-4-ene-3,17-dione + oxidized [NADPH--hemoprotein reductase] + 2 H2O + H(+). It catalyses the reaction 19-oxo-androst-4-ene-3,17-dione + reduced [NADPH--hemoprotein reductase] + O2 = estrone + formate + oxidized [NADPH--hemoprotein reductase] + H2O + 2 H(+). The enzyme catalyses estrone + reduced [NADPH--hemoprotein reductase] + O2 = 2-hydroxyestrone + oxidized [NADPH--hemoprotein reductase] + H2O + H(+). It carries out the reaction 17beta-hydroxy-5alpha-androstan-3-one + reduced [NADPH--hemoprotein reductase] + O2 = 17beta,19-dihydroxy-3-oxo-5alpha-androstanone + oxidized [NADPH--hemoprotein reductase] + H2O + H(+). The catalysed reaction is 17beta,19-dihydroxy-3-oxo-5alpha-androstanone + reduced [NADPH--hemoprotein reductase] + O2 = 17beta-hydroxy-3,19-dioxo-5alpha-androstanone + oxidized [NADPH--hemoprotein reductase] + 2 H2O + H(+). It catalyses the reaction 17beta-hydroxy-3,19-dioxo-5alpha-androstanone + reduced [NADPH--hemoprotein reductase] + O2 = 17beta-hydroxy-3-oxo-19-nor-5alpha-androst-1-ene + formate + oxidized [NADPH--hemoprotein reductase] + H2O + 2 H(+). It functions in the pathway steroid hormone biosynthesis. A cytochrome P450 monooxygenase that catalyzes the conversion of C19 androgens, androst-4-ene-3,17-dione (androstenedione) and testosterone to the C18 estrogens, estrone and estradiol, respectively. Catalyzes three successive oxidations of C19 androgens: two conventional oxidations at C19 yielding 19-hydroxy and 19-oxo/19-aldehyde derivatives, followed by a third oxidative aromatization step that involves C1-beta hydrogen abstraction combined with cleavage of the C10-C19 bond to yield a phenolic A ring and formic acid. Alternatively, the third oxidative reaction yields a 19-norsteroid and formic acid. Converts dihydrotestosterone to delta1,10-dehydro 19-nordihydrotestosterone and may play a role in homeostasis of this potent androgen. Also displays 2-hydroxylase activity toward estrone. Mechanistically, uses molecular oxygen inserting one oxygen atom into a substrate, and reducing the second into a water molecule, with two electrons provided by NADPH via cytochrome P450 reductase (CPR; NADPH-ferrihemoprotein reductase). The polypeptide is Aromatase (CYP19A1) (Canis lupus familiaris (Dog)).